The following is a 139-amino-acid chain: Holo-[acyl-carrier-protein] synthase (139 aa).

The Mg(2+) site is built by aspartate 8 and glutamate 61.

Belongs to the P-Pant transferase superfamily. AcpS family. It depends on Mg(2+) as a cofactor.

The protein localises to the cytoplasm. It carries out the reaction apo-[ACP] + CoA = holo-[ACP] + adenosine 3',5'-bisphosphate + H(+). Functionally, transfers the 4'-phosphopantetheine moiety from coenzyme A to a Ser of acyl-carrier-protein. The chain is Holo-[acyl-carrier-protein] synthase from Nitrobacter winogradskyi (strain ATCC 25391 / DSM 10237 / CIP 104748 / NCIMB 11846 / Nb-255).